We begin with the raw amino-acid sequence, 872 residues long: MKKQLNPKYDHLQVEKDKYQYWLDKNLFKADINSNKPKFSIILPPPNVTGKLHIGHAWDTSLQDAIIRFKKLTGYDTLFLPGMDHSGISTQVKVEAKLKQQGIDKNKLGREKFLLEAWKWKEEYANIIRKQWAKLGLSLDYSTEKFTLDEDINQIVKEIFVKFYNDQIIYKDKQIVNWDPEQKTAISNVEVIYKETQSKMYYFKYILEDSNEYLTVATTRPETMFADQCLVVNPNDSRYQKYINKKVINPVNKQVIPIISDEYVDIEFGTGVMKCTPAHDLNDYHLGIKHNLKMPICLNIDGSVNQLGGKYQGLDRFVARKKIIKNAIKEDLFVKEEDIINQVGFSERSNAIVEPYLSDQWFVKMDKFKNMVIDLQNSDNKINFYPNRFSDVLNRWMTDAHDWCISRQLWWGHQIPCWYHKKTNEMYVGINPPSDIENWTQDQDVLDTWFSSGLWAFSTLLNNKGLESEYFKNYFPTSVLVTGYDIIFFWVARMIFQTLEYTKQIPFKDVLIHGLVRDESNRKMSKSLGNGIDPMDVINNNGCDSLRLFLLTNSTPGQDIRYSNEKILASWNFINKLWNASRYVFLNLDEDFKFDPNFYKTDLEITNQWILTQLSKTQTYVYEKMNKYEFSLAGNHLWDFVWNKYCSWYIEFSKVNLNNDKFTHQTKQTLFYVLKEILIMLHPLIPFVSEEIYLNMMLKESILLEQWTNLNSNYDTSFIDDVIKMITSIREFRNTKNIKNDVCLSVNISNTNQNHTKLFKKHFDQIYNFLFNFCNTKLVDEAIKNKTSLSIDEYFIEIANDSFINKNELIKELEQKQNYLNNEITRSQKILNNQEFIKKAKPEKIQSEKIKYQNYLDQLQAIKDKLKELTND.

The 'HIGH' region signature appears at 46-56 (PNVTGKLHIGH). The 'KMSKS' region signature appears at 523–527 (KMSKS). Lys-526 serves as a coordination point for ATP. A coiled-coil region spans residues 796-872 (IEIANDSFIN…KDKLKELTND (77 aa)).

Belongs to the class-I aminoacyl-tRNA synthetase family. ValS type 1 subfamily. In terms of assembly, monomer.

Its subcellular location is the cytoplasm. It carries out the reaction tRNA(Val) + L-valine + ATP = L-valyl-tRNA(Val) + AMP + diphosphate. Its function is as follows. Catalyzes the attachment of valine to tRNA(Val). As ValRS can inadvertently accommodate and process structurally similar amino acids such as threonine, to avoid such errors, it has a 'posttransfer' editing activity that hydrolyzes mischarged Thr-tRNA(Val) in a tRNA-dependent manner. This chain is Valine--tRNA ligase, found in Mycoplasma mycoides subsp. mycoides SC (strain CCUG 32753 / NCTC 10114 / PG1).